The chain runs to 43 residues: Bacteriocin mundticin (43 aa).

Cys9 and Cys14 are disulfide-bonded.

This bacteriocin inhibits the growth of several Gram-positive bacteria, especially pathogenic L.monocytogenes and C.botulinum but has no effect on the growth of a number of yeasts and Gram-negative bacteria. The protein is Bacteriocin mundticin of Enterococcus mundtii.